The following is a 432-amino-acid chain: Cyclic di-GMP phosphodiesterase CdgJ (432 aa).

Residues 1-232 (MVRCLWAAEC…QRYVSPEHVI (232 aa)) form the EAL domain. The 188-residue stretch at 226-413 (VSPEHVIAMQ…CLELGFDLED (188 aa)) folds into the HDOD domain.

It catalyses the reaction 3',3'-c-di-GMP + H2O = 5'-phosphoguanylyl(3'-&gt;5')guanosine + H(+). Functionally, phosphodiesterase (PDE) that catalyzes the hydrolysis of cyclic diguanylate (c-di-GMP). Positively regulates motility and negatively regulates biofilm formation. The sequence is that of Cyclic di-GMP phosphodiesterase CdgJ from Vibrio cholerae serotype O1 (strain ATCC 39315 / El Tor Inaba N16961).